Consider the following 297-residue polypeptide: 4-diphosphocytidyl-2-C-methyl-D-erythritol kinase (297 aa).

Lys6 is a catalytic residue. 94–104 lines the ATP pocket; sequence PVAGGMAGGSA. Asp136 is an active-site residue.

It belongs to the GHMP kinase family. IspE subfamily.

It catalyses the reaction 4-CDP-2-C-methyl-D-erythritol + ATP = 4-CDP-2-C-methyl-D-erythritol 2-phosphate + ADP + H(+). Its pathway is isoprenoid biosynthesis; isopentenyl diphosphate biosynthesis via DXP pathway; isopentenyl diphosphate from 1-deoxy-D-xylulose 5-phosphate: step 3/6. Functionally, catalyzes the phosphorylation of the position 2 hydroxy group of 4-diphosphocytidyl-2C-methyl-D-erythritol. The chain is 4-diphosphocytidyl-2-C-methyl-D-erythritol kinase from Nocardioides sp. (strain ATCC BAA-499 / JS614).